The chain runs to 312 residues: 4-diphosphocytidyl-2-C-methyl-D-erythritol kinase (312 aa).

The active site involves Lys18. 104–114 is a binding site for ATP; it reads PIAGGMGGGSA. The active site involves Asp146.

This sequence belongs to the GHMP kinase family. IspE subfamily.

It catalyses the reaction 4-CDP-2-C-methyl-D-erythritol + ATP = 4-CDP-2-C-methyl-D-erythritol 2-phosphate + ADP + H(+). Its pathway is isoprenoid biosynthesis; isopentenyl diphosphate biosynthesis via DXP pathway; isopentenyl diphosphate from 1-deoxy-D-xylulose 5-phosphate: step 3/6. Catalyzes the phosphorylation of the position 2 hydroxy group of 4-diphosphocytidyl-2C-methyl-D-erythritol. This chain is 4-diphosphocytidyl-2-C-methyl-D-erythritol kinase, found in Clavibacter michiganensis subsp. michiganensis (strain NCPPB 382).